The chain runs to 346 residues: UPF0053 protein sll1254 (346 aa).

4 consecutive transmembrane segments (helical) span residues 1 to 21 (MLEI…CSCA), 58 to 78 (IGTI…TIGA), 87 to 107 (AWMG…GEII), and 121 to 141 (LLIA…VWLI). Residues 1 to 179 (MLEIVAAIFI…YKEGVIEGDE (179 aa)) form the CNNM transmembrane domain. CBS domains lie at 198-259 (MTPR…GYKT) and 263-320 (LARP…IVDE).

It belongs to the UPF0053 family.

It localises to the cell membrane. This is UPF0053 protein sll1254 from Synechocystis sp. (strain ATCC 27184 / PCC 6803 / Kazusa).